The following is a 171-amino-acid chain: Siroheme decarboxylase NirH subunit (171 aa).

Belongs to the Ahb/Nir family. Probably forms a complex composed of NirD, NirL, NirG and NirH. All proteins are required for the total conversion of siroheme to didecarboxysiroheme.

The catalysed reaction is siroheme + 2 H(+) = 12,18-didecarboxysiroheme + 2 CO2. The protein operates within porphyrin-containing compound metabolism. In terms of biological role, involved in heme d1 biosynthesis. Catalyzes the decarboxylation of siroheme into didecarboxysiroheme. The polypeptide is Siroheme decarboxylase NirH subunit (Pseudomonas aeruginosa (strain ATCC 15692 / DSM 22644 / CIP 104116 / JCM 14847 / LMG 12228 / 1C / PRS 101 / PAO1)).